Consider the following 132-residue polypeptide: uncharacterized protein (132 aa).

A signal peptide spans M1–A17. The segment covering S25–S39 has biased composition (low complexity). The interval S25–R79 is disordered.

This is an uncharacterized protein from Escherichia coli (strain K12).